The primary structure comprises 144 residues: Large ribosomal subunit protein uL16 (144 aa).

It belongs to the universal ribosomal protein uL16 family. As to quaternary structure, part of the 50S ribosomal subunit.

Binds 23S rRNA and is also seen to make contacts with the A and possibly P site tRNAs. This is Large ribosomal subunit protein uL16 from Halothermothrix orenii (strain H 168 / OCM 544 / DSM 9562).